A 239-amino-acid polypeptide reads, in one-letter code: 7-cyano-7-deazaguanine synthase (239 aa).

13 to 23 (LSGGQDSATCL) is an ATP binding site. The Zn(2+) site is built by Cys-199, Cys-214, Cys-217, and Cys-220.

This sequence belongs to the QueC family. It depends on Zn(2+) as a cofactor.

It catalyses the reaction 7-carboxy-7-deazaguanine + NH4(+) + ATP = 7-cyano-7-deazaguanine + ADP + phosphate + H2O + H(+). It functions in the pathway purine metabolism; 7-cyano-7-deazaguanine biosynthesis. Catalyzes the ATP-dependent conversion of 7-carboxy-7-deazaguanine (CDG) to 7-cyano-7-deazaguanine (preQ(0)). This Acidovorax ebreus (strain TPSY) (Diaphorobacter sp. (strain TPSY)) protein is 7-cyano-7-deazaguanine synthase.